The sequence spans 444 residues: Na(+)-translocating NADH-quinone reductase subunit A (444 aa).

This sequence belongs to the NqrA family. Composed of six subunits; NqrA, NqrB, NqrC, NqrD, NqrE and NqrF.

It carries out the reaction a ubiquinone + n Na(+)(in) + NADH + H(+) = a ubiquinol + n Na(+)(out) + NAD(+). In terms of biological role, NQR complex catalyzes the reduction of ubiquinone-1 to ubiquinol by two successive reactions, coupled with the transport of Na(+) ions from the cytoplasm to the periplasm. NqrA to NqrE are probably involved in the second step, the conversion of ubisemiquinone to ubiquinol. This Shewanella denitrificans (strain OS217 / ATCC BAA-1090 / DSM 15013) protein is Na(+)-translocating NADH-quinone reductase subunit A.